The chain runs to 376 residues: Phosphatidylinositol/phosphatidylcholine transfer protein SFH11 (376 aa).

Residues 1–20 (MQETDRDIHISDGTMNKEEQ) show a composition bias toward basic and acidic residues. Residues 1–24 (MQETDRDIHISDGTMNKEEQSPNN) are disordered. One can recognise a CRAL-TRIO domain in the interval 92 to 266 (EYGEVKKHYP…FLGGNCTCSD (175 aa)). Positions 323–357 (MEKYAALKTAVKDSQKRIEMLEISLHETKKVLNGL) form a coiled coil.

It belongs to the SFH family.

The protein localises to the golgi apparatus membrane. It localises to the cell membrane. Functionally, required for transport of secretory proteins from the Golgi complex. Catalyzes the transfer of phosphatidylinositol and phosphatidylcholine between membranes in vitro. The protein is Phosphatidylinositol/phosphatidylcholine transfer protein SFH11 (SFH11) of Arabidopsis thaliana (Mouse-ear cress).